We begin with the raw amino-acid sequence, 631 residues long: Glutamyl-tRNA(Gln) amidotransferase subunit E (631 aa).

The protein belongs to the GatB/GatE family. GatE subfamily. Heterodimer of GatD and GatE.

It catalyses the reaction L-glutamyl-tRNA(Gln) + L-glutamine + ATP + H2O = L-glutaminyl-tRNA(Gln) + L-glutamate + ADP + phosphate + H(+). Functionally, allows the formation of correctly charged Gln-tRNA(Gln) through the transamidation of misacylated Glu-tRNA(Gln) in organisms which lack glutaminyl-tRNA synthetase. The reaction takes place in the presence of glutamine and ATP through an activated gamma-phospho-Glu-tRNA(Gln). The GatDE system is specific for glutamate and does not act on aspartate. The protein is Glutamyl-tRNA(Gln) amidotransferase subunit E of Methanococcus maripaludis (strain DSM 14266 / JCM 13030 / NBRC 101832 / S2 / LL).